We begin with the raw amino-acid sequence, 133 residues long: Ubiquitin-like FUBI-ribosomal protein eS30 fusion protein (133 aa).

Residues methionine 1–glycine 74 enclose the Ubiquitin-like domain. Residues glycine 84 to methionine 110 form a disordered region. Basic residues predominate over residues glutamate 97 to methionine 110. The residue at position 125 (lysine 125) is an N6-succinyllysine.

This sequence in the N-terminal section; belongs to the ubiquitin family. It in the C-terminal section; belongs to the eukaryotic ribosomal protein eS30 family. Component of the 40S subunit of the ribosome. Post-translationally, FUBI is cleaved from ribosomal protein S30 by the deubiquitinase USP36 before the assembly of ribosomal protein S30 into pre-40S ribosomal particles. FUBI removal from ribosomal protein S30 is a crucial event for the final maturation of pre-40S particles.

It localises to the cytoplasm. It is found in the nucleus. Functionally, may have pro-apoptotic activity. Its function is as follows. Component of the 40S subunit of the ribosome. Contributes to the assembly and function of 40S ribosomal subunits. In Homo sapiens (Human), this protein is Ubiquitin-like FUBI-ribosomal protein eS30 fusion protein.